A 306-amino-acid polypeptide reads, in one-letter code: Porphobilinogen deaminase (306 aa).

Residue C239 is modified to S-(dipyrrolylmethanemethyl)cysteine.

The protein belongs to the HMBS family. Monomer. It depends on dipyrromethane as a cofactor.

It catalyses the reaction 4 porphobilinogen + H2O = hydroxymethylbilane + 4 NH4(+). It participates in porphyrin-containing compound metabolism; protoporphyrin-IX biosynthesis; coproporphyrinogen-III from 5-aminolevulinate: step 2/4. Tetrapolymerization of the monopyrrole PBG into the hydroxymethylbilane pre-uroporphyrinogen in several discrete steps. This chain is Porphobilinogen deaminase, found in Helicobacter pylori (strain G27).